The following is a 185-amino-acid chain: Ribosome-recycling factor (185 aa).

Belongs to the RRF family.

It is found in the cytoplasm. Its function is as follows. Responsible for the release of ribosomes from messenger RNA at the termination of protein biosynthesis. May increase the efficiency of translation by recycling ribosomes from one round of translation to another. This chain is Ribosome-recycling factor, found in Pseudarthrobacter chlorophenolicus (strain ATCC 700700 / DSM 12829 / CIP 107037 / JCM 12360 / KCTC 9906 / NCIMB 13794 / A6) (Arthrobacter chlorophenolicus).